Here is a 430-residue protein sequence, read N- to C-terminus: MTVLYTSASLKKMKCLAFNMGMNCVRTVSHARSGGAKFGGRNVFNIFDSKTPDSVRIKAFKNTIYQSAMGKGKTKFSAMEINLITSLVRGYKGEGKKNAINPLQTNVQILNKLLLTHRLTDKDILEGMNLAAGPVNVAIPRDITPQEEKKKVELRNRKAENMDLHPSRKMHIKELLHSLNLDMCNDEEVYQKISLYLQKNEESRTSVGASQQNHVDIDINSLKRYLQNIEKKARQKSAIDKQKKNQARIYQWNTQSFSEIVPLSAGNILFKREPNRLWKRLQNGISVFLGSNGGGKKSKTTKKVLQGNNILLHSLENNKDMTLSNNFDHSVFNINFTDLFGVINASGSPPDRVLNEINEIELKGWKCVGNLYDNNKIVVFQSSNPLLEDTKIPQKSFTNSKRFLISLSALLASFFAYYRYRLSQRQESKK.

The transit peptide at 1–27 (MTVLYTSASLKKMKCLAFNMGMNCVRT) directs the protein to the mitochondrion. A helical membrane pass occupies residues 403–420 (FLISLSALLASFFAYYRY).

Associates with the mitochondrial ribosome.

The protein localises to the mitochondrion. Its subcellular location is the mitochondrion membrane. In terms of biological role, component of MIOREX complexes, large expressome-like assemblies of ribosomes with factors involved in all the steps of post-transcriptional gene expression. The sequence is that of MIOREX complex component 4 from Saccharomyces cerevisiae (strain ATCC 204508 / S288c) (Baker's yeast).